A 511-amino-acid chain; its full sequence is Bifunctional purine biosynthesis protein PurH (511 aa).

The MGS-like domain maps to 1–145 (MKRRALVSVS…KNHQHVTVVV (145 aa)).

The protein belongs to the PurH family.

The catalysed reaction is (6R)-10-formyltetrahydrofolate + 5-amino-1-(5-phospho-beta-D-ribosyl)imidazole-4-carboxamide = 5-formamido-1-(5-phospho-D-ribosyl)imidazole-4-carboxamide + (6S)-5,6,7,8-tetrahydrofolate. The enzyme catalyses IMP + H2O = 5-formamido-1-(5-phospho-D-ribosyl)imidazole-4-carboxamide. Its pathway is purine metabolism; IMP biosynthesis via de novo pathway; 5-formamido-1-(5-phospho-D-ribosyl)imidazole-4-carboxamide from 5-amino-1-(5-phospho-D-ribosyl)imidazole-4-carboxamide (10-formyl THF route): step 1/1. It functions in the pathway purine metabolism; IMP biosynthesis via de novo pathway; IMP from 5-formamido-1-(5-phospho-D-ribosyl)imidazole-4-carboxamide: step 1/1. In Halalkalibacterium halodurans (strain ATCC BAA-125 / DSM 18197 / FERM 7344 / JCM 9153 / C-125) (Bacillus halodurans), this protein is Bifunctional purine biosynthesis protein PurH.